A 452-amino-acid chain; its full sequence is GPI mannosyltransferase 2 (452 aa).

Residues 1–7 (MMEKVTK) are Cytoplasmic-facing. The helical transmembrane segment at 8–28 (LALTSRVMVLVVQLLANFATP) threads the bilayer. Residues 29–113 (DHKPDVFRMP…HLGIPLSRDA (85 aa)) lie on the Lumenal side of the membrane. Residues 114–134 (LILLVAVALNVLIFCKTANVL) traverse the membrane as a helical segment. The Cytoplasmic portion of the chain corresponds to 135–161 (YKLTQRMFNDHNKSWNAALIFCFNPAS). A helical transmembrane segment spans residues 162–182 (IFFSAAYSETFFAFASFSLML). Over 183–209 (ECMRSEKDFRTFRLGAALTGCFVCRSN) the chain is Lumenal. The helical transmembrane segment at 210–230 (GLLTLGFPLYFLARHILLSTG) threads the bilayer. At 231–238 (SVQRCWQL) the chain is on the cytoplasmic side. A helical transmembrane segment spans residues 239–259 (FKMGLAMLVALGILHTYYFYI). Over 260 to 284 (YRLYCLPDVKVQHAQHVVDYAKERS) the chain is Lumenal. Residues 285 to 305 (FLISGQASVGSPWCGYTLPFP) traverse the membrane as a helical segment. At 306–327 (YTYVQSHYWDVGFLRYYKWKQL) the chain is on the cytoplasmic side. Residues 328 to 348 (PNFLLALPMLLFMHWHCYDYI) traverse the membrane as a helical segment. Over 349–370 (RKLVANTWSKISPSEYQGILKE) the chain is Lumenal. A helical membrane pass occupies residues 371–391 (HISFPFVLHAAVLTLVCTLYV). At 392–398 (HIQVSTR) the chain is on the cytoplasmic side. A helical transmembrane segment spans residues 399–419 (LLASATPVFYWFAADYMPNTF). Residues 420–426 (QLSFRSK) are Lumenal-facing. A helical membrane pass occupies residues 427–447 (AGVLFIWCLTYSLVGTVLFSN). Over 448 to 452 (NYPWT) the chain is Cytoplasmic.

It belongs to the PIGV family.

The protein resides in the endoplasmic reticulum membrane. It participates in glycolipid biosynthesis; glycosylphosphatidylinositol-anchor biosynthesis. Mannosyltransferase involved in glycosylphosphatidylinositol-anchor biosynthesis. Transfers the second mannose to the glycosylphosphatidylinositol during GPI precursor assembly. Required for the GPI-mediated endoplasmic reticulum exit and proper targeting to the cell surface of chp. Required for GPI-mediated membrane attachment of chp, qsm and Cont. Essential for microvillar stability in the rhabdomere. The polypeptide is GPI mannosyltransferase 2 (Drosophila pseudoobscura pseudoobscura (Fruit fly)).